A 570-amino-acid polypeptide reads, in one-letter code: Serine/threonine-protein kinase Pink1, mitochondrial (570 aa).

Residues 1 to 5 (MSVRA) constitute a mitochondrion transit peptide. At 6–96 (VGSRLFKHGR…AELRKKATRR (91 aa)) the chain is on the mitochondrial intermembrane side. Residues 97 to 120 (ILFGDSAPFFALVGVSIASGTGIL) traverse the membrane as a helical segment. The Cytoplasmic portion of the chain corresponds to 121–570 (TKEEELEGVC…WIQENLPELD (450 aa)). Positions 162-484 (LSLGKPIAKG…VAANVCQLFL (323 aa)) constitute a Protein kinase domain. ATP is bound at residue Lys196. Ser205 bears the Phosphoserine; by autocatalysis mark. Position 217 (Glu217) interacts with Mg(2+). Residues Lys295, Tyr297, and Asn300 each contribute to the ATP site. Asp337 (proton acceptor) is an active-site residue. Asp341 is a binding site for ATP. The Mg(2+) site is built by Asn342 and Asp359. Asp359 is an ATP binding site. A Phosphoserine; by autocatalysis modification is found at Ser377. Thr386 carries the post-translational modification Phosphothreonine; by autocatalysis. Thr530 carries the phosphothreonine modification.

Belongs to the protein kinase superfamily. Ser/Thr protein kinase family. It depends on Mg(2+) as a cofactor. Post-translationally, proteolytically cleaved. In healthy cells, the precursor is continuously imported into mitochondria where it is proteolytically cleaved into its short form by the mitochondrial rhomboid protease rho-7 (TcasGA2_TC013516). The short form is then released into the cytosol where it rapidly undergoes proteasome-dependent degradation. In unhealthy cells, when cellular stress conditions lead to the loss of mitochondrial membrane potential, mitochondrial import is impaired leading to the precursor accumulating on the outer mitochondrial membrane (OMM). Autophosphorylated on Ser-205, which activates kinase activity and is required for substrate recognition. Loss of mitochondrial membrane potential results in the precursor accumulating on the outer mitochondrial membrane (OMM) where it is activated by autophosphorylation at Ser-205. Autophosphorylation is sufficient and essential for selective recruitment of park to depolarized mitochondria, likely via Pink1-dependent phosphorylation of polyubiquitin chains. Also autophosphorylated at Ser-377, Thr-386 and possibly Thr-530. Another report found evidence of autophosphorylation at Ser-154, Thr-186, Thr-218, Ser-267 and Thr-530, as well as a number of other minor sites, but determined that phosphorylation at these sites is not required for enzyme activity and may not occur in vivo.

It is found in the mitochondrion outer membrane. Its subcellular location is the mitochondrion inner membrane. The protein localises to the cytoplasm. The protein resides in the cytosol. The catalysed reaction is L-seryl-[protein] + ATP = O-phospho-L-seryl-[protein] + ADP + H(+). The enzyme catalyses L-threonyl-[protein] + ATP = O-phospho-L-threonyl-[protein] + ADP + H(+). Functionally, acts as a serine/threonine-protein kinase. Exhibits a substrate preference for proline at position P+1 and a general preference at several residues for basic residues such as arginine. Also exhibits moderate preferences for a phosphotyrosine at position P-3 and a tryptophan at P-5. Critical to mitochondrial homeostasis it mediates several pathways that maintain mitochondrial health and function. Protects against mitochondrial dysfunction during cellular stress by phosphorylating mitochondrial proteins such as park and likely Drp1, to coordinate mitochondrial quality control mechanisms that remove and replace dysfunctional mitochondrial components. Depending on the severity of mitochondrial damage and/or dysfunction, activity ranges from preventing apoptosis and stimulating mitochondrial biogenesis to regulating mitochondrial dynamics and eliminating severely damaged mitochondria via mitophagy. Appears to be particularly important in maintaining the physiology and function of cells with high energy demands that are undergoing stress or altered metabolic environment, including spermatids, muscle cells and neurons such as the dopaminergic (DA) neurons. Mediates the translocation and activation of park at the outer membrane (OMM) of dysfunctional/depolarized mitochondria. At the OMM of damaged mitochondria, phosphorylates pre-existing polyubiquitin chains, the Pink1-phosphorylated polyubiquitin then recruits park from the cytosol to the OMM where park is fully activated by phosphorylation at 'Ser-80' by Pink1. When cellular stress results in irreversible mitochondrial damage, functions with park to promote the clearance of dysfunctional and/or depolarized mitochondria by selective autophagy (mitophagy). The Pink1-park pathway also promotes fission and/or inhibits fusion of damaged mitochondria, by phosphorylating and thus promoting the park-dependent degradation of proteins involved in mitochondrial fusion/fission such as Marf, Opa1 and fzo. This prevents the refusion of unhealthy mitochondria with the mitochondrial network or initiates mitochondrial fragmentation facilitating their later engulfment by autophagosomes. Also likely to promote mitochondrial fission independently of park and Atg7-mediated mitophagy, via the phosphorylation and activation of Drp1. Regulates motility of damaged mitochondria by phosphorylating Miro which likely promotes its park-dependent degradation by the proteasome; in motor neurons, this inhibits mitochondrial intracellular anterograde transport along the axons which probably increases the chance of the mitochondria being eliminated in the soma. The Pink1-park pathway is also involved in mitochondrial regeneration processes such as promoting mitochondrial biogenesis, activating localized mitochondrial repair, promoting selective turnover of mitochondrial proteins and initiating the mitochondrial import of endogenous proteins. Involved in mitochondrial biogenesis by promoting the park-dependent ubiquitination of transcriptional repressor Paris which leads to its subsequent proteasomal degradation and allows activation of the transcription factor srl. Functions with park to promote localized mitochondrial repair by activating the translation of specific nuclear-encoded mitochondrial RNAs (nc-mtRNAs) on the mitochondrial surface, including several key electron transport chain component nc-mtRNAs. During oogenesis, phosphorylates and inactivates larp on the membrane of defective mitochondria, thus impairing local translation and mtDNA replication and consequently, reducing transmission of deleterious mtDNA mutations to the mature oocyte. Phosphorylates the mitochondrial acyl-CoA dehydrogenase Mcad, and appears to be important for maintaining fatty acid and amino acid metabolism via a mechanism that is independent of it's role in maintaining production of ATP. The polypeptide is Serine/threonine-protein kinase Pink1, mitochondrial (Tribolium castaneum (Red flour beetle)).